A 72-amino-acid chain; its full sequence is Translation initiation factor IF-1 (72 aa).

Positions Met1–Lys72 constitute an S1-like domain.

The protein belongs to the IF-1 family. Component of the 30S ribosomal translation pre-initiation complex which assembles on the 30S ribosome in the order IF-2 and IF-3, IF-1 and N-formylmethionyl-tRNA(fMet); mRNA recruitment can occur at any time during PIC assembly.

The protein localises to the cytoplasm. In terms of biological role, one of the essential components for the initiation of protein synthesis. Stabilizes the binding of IF-2 and IF-3 on the 30S subunit to which N-formylmethionyl-tRNA(fMet) subsequently binds. Helps modulate mRNA selection, yielding the 30S pre-initiation complex (PIC). Upon addition of the 50S ribosomal subunit IF-1, IF-2 and IF-3 are released leaving the mature 70S translation initiation complex. This chain is Translation initiation factor IF-1, found in Streptococcus suis (strain 05ZYH33).